The primary structure comprises 571 residues: WAP, Kazal, immunoglobulin, Kunitz and NTR domain-containing protein 2 (571 aa).

An N-terminal signal peptide occupies residues 1–29 (MCAPGYHRFWFHWGLLLLLLLEAPLRGLA). A WAP domain is found at 34–87 (RYSHAGICPNDMNPNLWVDAQSTCKRECETDQECETYEKCCPNVCGTKSCVAAR). Intrachain disulfides connect Cys-41-Cys-74, Cys-57-Cys-78, Cys-61-Cys-73, Cys-67-Cys-83, Cys-129-Cys-159, Cys-133-Cys-152, Cys-141-Cys-170, and Cys-226-Cys-282. The Kazal-like domain occupies 121–172 (WDGQPVCKCKDRCEKEPSFTCASDGLTYYNRCFMDAEACSKGITLSVVTCRY). The 94-residue stretch at 205-298 (PALLNHPVHQ…GVLRADFPLS (94 aa)) folds into the Ig-like C2-type domain. N-linked (GlcNAc...) asparagine glycosylation occurs at Asn-314. Cystine bridges form between Cys-323-Cys-373, Cys-332-Cys-356, Cys-348-Cys-369, Cys-381-Cys-431, Cys-390-Cys-414, Cys-406-Cys-427, Cys-440-Cys-510, Cys-443-Cys-512, and Cys-454-Cys-561. 2 consecutive BPTI/Kunitz inhibitor domains span residues 323–373 (CLKP…MLAC) and 381–431 (CSLP…EESC). In terms of domain architecture, NTR spans 440–561 (CRACKPRQKL…LREVMYKKTC (122 aa)). Residue Asn-514 is glycosylated (N-linked (GlcNAc...) asparagine).

The protein belongs to the WFIKKN family. As to quaternary structure, interacts with both mature and propeptide myostatin/MSTN. As to expression, widely expressed, with high expression in skeletal muscle and heart. Also expressed in brain, lung and testis. Weakly expressed in liver and kidney.

The protein resides in the secreted. Its function is as follows. Protease-inhibitor that contains multiple distinct protease inhibitor domains. Probably has serine protease- and metalloprotease-inhibitor activity. Inhibits the biological activity of mature myostatin, but not activin. The chain is WAP, Kazal, immunoglobulin, Kunitz and NTR domain-containing protein 2 (Wfikkn2) from Mus musculus (Mouse).